A 407-amino-acid chain; its full sequence is V-set and immunoglobulin domain-containing protein 1 (407 aa).

Positions 1 to 22 (MMVFAFWKVFLILNCLAGQVSM) are cleaved as a signal peptide. The region spanning 23-134 (VQVTIPDTFV…HFVGKNQGLL (112 aa)) is the Ig-like V-type domain. Residues 23–234 (VQVTIPDTFV…EIDLTSSHPE (212 aa)) are Extracellular-facing. Residue Asn-39 is glycosylated (N-linked (GlcNAc...) asparagine). Intrachain disulfides connect Cys-44-Cys-118 and Cys-163-Cys-213. The 85-residue stretch at 145–229 (PFCTIQGRPE…GNSSCEIDLT (85 aa)) folds into the Ig-like C2-type domain. Asn-202 and Asn-221 each carry an N-linked (GlcNAc...) asparagine glycan. Residues 235–255 (VGIIIGALVGALIGAAVIICV) form a helical membrane-spanning segment. Over 256–407 (VYFARNKVKS…SKAGEDTVKA (152 aa)) the chain is Cytoplasmic. Disordered stretches follow at residues 268 to 289 (QKNL…PQQS) and 318 to 407 (TAVL…TVKA). Residues Ser-273 and Ser-274 each carry the phosphoserine modification. Positions 361 to 371 (DPETETEPEPE) are enriched in acidic residues.

The protein localises to the membrane. This Mus musculus (Mouse) protein is V-set and immunoglobulin domain-containing protein 1 (Vsig1).